The sequence spans 1237 residues: MNCRRKPLPLHSNEVQAAESISKDELYSWTLKNVLILFLVQYRASTPSALQTSSFSTPVEKKTNGAFSGSLFSAKEKKDNPKYPKDFIKYLSLALESISMGKEPEYQDQLIRGCFAAFYNNINKSHISKQLKDSRKIEDMFLIFASSVSSELTKRLGTAYDSNLADRITASFIELCKRVTLKGQLASPSSEFVSHLDMYHSKLLNKSEILSTKRVNRGQDQFDLSSFPLLKVFSSVFKVAYSKALLDAEKLFPSIDEAAIAEDIGILIEDLESDACKFSHSVVDFSNYKSYSTWKARELQTLEQHRKIMLSLIPLSSSPNHPIQPIGFPASRKTPTYVPPIARPYFRQLLSLCLEYRLQVTDPVEVKQINTFIRECSIYWRILPSTRCALSMDFAREHLQKGLITSADVLTHFGELHKSLKEWEITYWPKIDVSIFSSALFGIRNALAQLLKKSLLDLLHEKKADFHRWLNIMSICVEDGKVINQDLSPKSEISSVALALQEHCKVIFDEEFDLSKLPSSNFLDEIILASNRISVRIKFLERNCSECIYGVLSLPQIFINIVLPNYIRAALVVAKEYLREKANADINDLTKDMLEIYSDLKQMIHVLQEYHNEEYRIGSFEGFFQPFIDSWLDNVEASAEQWFLRSLEKDNFDENSSEGQYSSSIVDLFHAFHQAFRTLEGFEWEDDLANARFFTRFFRVIYIVLSKYTQWTTQKFFEEANKQDDTSEVQNDNSSSWFSKARNILSGSNEVLPFRFSPTMCILLNNIHFAMHAYEELEQKIDLQRLIEALDVAESTKRHKISATNYLYTIKVVRGEGLHPDGAGKIRTSYIVLTDNKGRRIGKTRPIHSMNPRWDDTFEVKTKDALMITANLWSKGKFNDHEIFGRSSFTLSPKIYGDYLPREEWFDLNPHGELLLRIEMEGEREHIGFYVGRTYHDLERAQREMIKFIVNKMEPVINQNLSTATLKKLLSANTWMDLDKTMTSVTSLLNRTGFSSKSSENVKKEGELTDVQIEAAIYELLDYFDLNFSIIAKHLTKDVFVTVMSYVWDEVVCTTEELLLPPVSVKPINRKPLSPAQMAIVYRWLQFLKDYFYANGEGVKLPVLETDHYKELLRVQEYYDKPTDFLLQECDKIASQLYLSSRMVNNEPVESLPRHSRIKFANKEIYRSGTIRKVHIQTNESELERNERIILRILRMRADSKRFLSKHFQRKGRLLMADAMRNGYVMPLGHLKKLDSR.

An MHD1 domain is found at 591 to 712 (KDMLEIYSDL…IVLSKYTQWT (122 aa)). The C2 domain maps to 786–906 (LIEALDVAES…GDYLPREEWF (121 aa)). An MHD2 domain is found at 1014 to 1130 (EAAIYELLDY…KPTDFLLQEC (117 aa)).

This is an uncharacterized protein from Schizosaccharomyces pombe (strain 972 / ATCC 24843) (Fission yeast).